The chain runs to 410 residues: Transcription factor SPN1 (410 aa).

Residues 1–132 (MSTADQEQPK…SRQELEEKLD (132 aa)) are disordered. Thr15 is modified (phosphothreonine). Positions 20–52 (TASSQKSTINAENENTKQNQSMEPQETSKGTSN) are enriched in polar residues. Ser23 bears the Phosphoserine; by ATM or ATR mark. Ser40 carries the post-translational modification Phosphoserine. The span at 53 to 65 (DTKDPDNGEKNEE) shows a compositional bias: basic and acidic residues. Ser85 is subject to Phosphoserine. A Phosphothreonine modification is found at Thr86. Ser89 carries the post-translational modification Phosphoserine. The TFIIS N-terminal domain maps to 219 to 296 (QSVRIWLEPL…AEWTRPIIGA (78 aa)). The interval 318 to 346 (KSVMDSAKNRKKKSKSGEDPTSRGSSVQT) is disordered.

It belongs to the IWS1 family. In terms of assembly, interacts with ABD1, RBP1, SPT5 and SPT6.

Its subcellular location is the nucleus. Transcription factor involved in RNA polymerase II transcription regulation. May function in both SPT15/TBP post-recruitment and recruitment steps of transcription. This chain is Transcription factor SPN1 (SPN1), found in Saccharomyces cerevisiae (strain ATCC 204508 / S288c) (Baker's yeast).